The primary structure comprises 460 residues: Inner membrane symporter YicJ (460 aa).

Residues 1–11 lie on the Periplasmic side of the membrane; it reads MKSEVLSVKEK. A run of 2 helical transmembrane segments spans residues 12-32 and 33-53; these read IGYG…MLYM and MFFY…MFLV. Residues 54 to 80 lie on the Periplasmic side of the membrane; sequence ARALDAISDPCMGLLADRTRSRWGKFR. The chain crosses the membrane as a helical span at residues 81 to 101; that stretch reads PWVLFGALPFGIVCVLAYSTP. Residues 102–116 lie on the Cytoplasmic side of the membrane; the sequence is DLSMNGKMIYAAITY. Residues 117–137 traverse the membrane as a helical segment; sequence TLLTLLYTVVNIPYCALGGVI. Topologically, residues 138–152 are periplasmic; sequence TNDPTQRISLQSWRF. The helical transmembrane segment at 153–173 threads the bilayer; sequence VLATAGGMLSTVLMMPLVNLI. At 174 to 181 the chain is on the cytoplasmic side; sequence GGDNKPLG. Residues 182 to 202 traverse the membrane as a helical segment; the sequence is FQGGIAVLSVVAFMMLAFCFF. Topologically, residues 203–248 are periplasmic; the sequence is TTKERVEAPPTTTSMREDLRDIWQNDQWRIVGLLTIFNILAVCVRG. The helical transmembrane segment at 249 to 269 threads the bilayer; sequence GAMMYYVTWILGTPEVFVAFL. Over 270–288 the chain is Cytoplasmic; that stretch reads TTYCVGNLIGSALAKPLTD. A helical transmembrane segment spans residues 289–309; it reads WKCKVTIFWWTNALLAVISLA. A topological domain (periplasmic) is located at residue methionine 310. A helical membrane pass occupies residues 311–331; sequence FFVPMQASITMFVFIFVIGVL. The Cytoplasmic segment spans residues 332 to 366; sequence HQLVTPIQWVMMSDTVDYGEWCNGKRLTGISFAGT. Residues 367–387 form a helical membrane-spanning segment; the sequence is LFVLKLGLAFGGALIGWMLAY. Over 388–403 the chain is Periplasmic; sequence GGYDAAEKAQNSATIS. A helical transmembrane segment spans residues 404-424; sequence IIIALFTIVPAICYLLSAIIA. The Cytoplasmic portion of the chain corresponds to 425–460; that stretch reads KRYYSLTTHNLKTVMEQLAQGKRRCQQQFTSQEVQN.

Belongs to the sodium:galactoside symporter (TC 2.A.2) family.

Its subcellular location is the cell inner membrane. This chain is Inner membrane symporter YicJ (yicJ), found in Escherichia coli (strain K12).